Here is a 106-residue protein sequence, read N- to C-terminus: Large ribosomal subunit protein uL24 (106 aa).

The protein belongs to the universal ribosomal protein uL24 family. As to quaternary structure, part of the 50S ribosomal subunit.

One of two assembly initiator proteins, it binds directly to the 5'-end of the 23S rRNA, where it nucleates assembly of the 50S subunit. Functionally, one of the proteins that surrounds the polypeptide exit tunnel on the outside of the subunit. The polypeptide is Large ribosomal subunit protein uL24 (Desulforudis audaxviator (strain MP104C)).